The primary structure comprises 234 residues: Ribonuclease 3 (234 aa).

In terms of domain architecture, RNase III spans L4 to N133. E46 provides a ligand contact to Mg(2+). Residue D50 is part of the active site. Mg(2+)-binding residues include D119 and E122. The active site involves E122. Positions D160–V228 constitute a DRBM domain.

This sequence belongs to the ribonuclease III family. As to quaternary structure, homodimer. It depends on Mg(2+) as a cofactor.

Its subcellular location is the cytoplasm. The enzyme catalyses Endonucleolytic cleavage to 5'-phosphomonoester.. Functionally, digests double-stranded RNA. Involved in the processing of primary rRNA transcript to yield the immediate precursors to the large and small rRNAs (23S and 16S). Processes some mRNAs, and tRNAs when they are encoded in the rRNA operon. Processes pre-crRNA and tracrRNA of type II CRISPR loci if present in the organism. The sequence is that of Ribonuclease 3 from Fusobacterium nucleatum subsp. nucleatum (strain ATCC 25586 / DSM 15643 / BCRC 10681 / CIP 101130 / JCM 8532 / KCTC 2640 / LMG 13131 / VPI 4355).